Reading from the N-terminus, the 481-residue chain is Exodeoxyribonuclease I (481 aa).

The 182-residue stretch at 12-193 (LFYDYETFGK…SSDVYATMNI (182 aa)) folds into the Exonuclease domain. The Mg(2+) site is built by aspartate 15, glutamate 17, and aspartate 186. Glutamate 17 is a substrate binding site. The 149-residue stretch at 202-350 (PKLFNFFFKY…KLKKFLCSIA (149 aa)) folds into the ExoI SH3-like domain. One can recognise an ExoI C-terminal domain in the interval 356 to 471 (NGSNVDLKMY…ELFEYVKYTR (116 aa)).

In terms of assembly, monomer. Interacts with ssb (via C-terminus); this interaction stimulates the exonuclease activity by recruiting the enzyme to its substrate. The cofactor is Mg(2+).

It catalyses the reaction Exonucleolytic cleavage in the 3'- to 5'-direction to yield nucleoside 5'-phosphates.. Functionally, degrades single-stranded DNA (ssDNA) in a highly processive manner. Also functions as a DNA deoxyribophosphodiesterase that releases deoxyribose-phosphate moieties following the cleavage of DNA at an apurinic/apyrimidinic (AP) site by either an AP endonuclease or AP lyase. This Buchnera aphidicola subsp. Baizongia pistaciae (strain Bp) protein is Exodeoxyribonuclease I (sbcB).